The sequence spans 310 residues: Fatty acid elongase 1 (310 aa).

At 1-63 the chain is on the lumenal side; it reads MVSDWKNFCL…VGKQPLSEPR (63 aa). The helical transmembrane segment at 64–84 threads the bilayer; the sequence is PVLLFIAMYYVVIFGGRSLVK. Residues 85–100 are Cytoplasmic-facing; it reads SCKPLKLRFISQVHNL. The chain crosses the membrane as a helical span at residues 101–121; the sequence is MLTSVSFLWLILMVEQMLPIV. The Lumenal portion of the chain corresponds to 122–141; sequence YRHGLYFAVCNVESWTQPME. A helical membrane pass occupies residues 142–163; sequence TLYYLNYMTKFVEFADTVLMVL. Topologically, residues 164–174 are cytoplasmic; sequence KHRKLTFLHTY. The HxxHH motif signature appears at 172–176; that stretch reads HTYHH. The helical transmembrane segment at 175 to 196 threads the bilayer; the sequence is HHGATALLCYNQLVGYTAVTWV. The Lumenal portion of the chain corresponds to 197-201; it reads PVTLN. The chain crosses the membrane as a helical span at residues 202–223; sequence LAVHVLMYWYYFLSASGIRVWW. At 224-234 the chain is on the cytoplasmic side; that stretch reads KAWVTRLQIVQ. A helical membrane pass occupies residues 235-255; it reads FMLDLIVVYYVLYQKIVAAYF. The Lumenal portion of the chain corresponds to 256–271; the sequence is KNACTPQCEDCLGSMT. The chain crosses the membrane as a helical span at residues 272–292; the sequence is AIAAGAAILTSYLFLFISFYI. At 293–310 the chain is on the cytoplasmic side; sequence EVYKRGSASGKKKINKNN. The Di-lysine motif signature appears at 304–307; sequence KKIN.

The protein belongs to the ELO family.

The protein resides in the endoplasmic reticulum membrane. It catalyses the reaction a very-long-chain acyl-CoA + malonyl-CoA + H(+) = a very-long-chain 3-oxoacyl-CoA + CO2 + CoA. It carries out the reaction tetradecanoyl-CoA + malonyl-CoA + H(+) = 3-oxohexadecanoyl-CoA + CO2 + CoA. The catalysed reaction is (9Z)-tetradecenoyl-CoA + malonyl-CoA + H(+) = 3-oxo-(11Z)-hexadecenoyl-CoA + CO2 + CoA. Component of a microsomal membrane bound medium-chain fatty acid elongation system, which extends medium-chain-length fatty acids to long-chain fatty acids. Component of elongase I, which extends 12-16-carbon fatty acyl-CoAs such as lauroyl-CoA to 14-18-carbon fatty acids by incorporation of malonyl-CoA. The polypeptide is Fatty acid elongase 1 (Saccharomyces cerevisiae (strain ATCC 204508 / S288c) (Baker's yeast)).